A 374-amino-acid chain; its full sequence is Phospho-2-dehydro-3-deoxyheptonate aldolase AMT16 (374 aa).

The protein belongs to the class-I DAHP synthase family.

The enzyme catalyses D-erythrose 4-phosphate + phosphoenolpyruvate + H2O = 7-phospho-2-dehydro-3-deoxy-D-arabino-heptonate + phosphate. It functions in the pathway mycotoxin biosynthesis. Nonribosomal peptide synthetase; part of the gene clusters that mediate the biosynthesis of AM-toxins, host-selective toxins (HSTs) causing Alternaria blotch on apple, a worldwide distributed disease. AM-toxins are cyclic depsipeptides containing the 3 residues 2-hydroxy-isovaleric acid (2-HIV), dehydroalanine, L-alanine which are common for all 3 AM-toxins I to III. The fourth precursor is L-alpha-amino-methoxyphenyl-valeric acid (L-Amv) for AM-toxin I, L-alpha-amino-phenyl-valeric acid (L-Apv) for AM-toxin II, and L-alpha-amino-hydroxyphenyl-valeric acid (L-Ahv) for AM-toxin III. AM-toxins have two target sites for affecting susceptible apple cells; they cause invagination of the plasma membrane and electrolyte loss and chloroplast disorganization. The non-ribosomal peptide synthetase AMT1 contains 4 catalytic modules and is responsible for activation of each residue in AM-toxin. The aldo-keto reductase AMT2 catalyzes the conversion of 2-keto-isovaleric acid (2-KIV) to 2-hydroxy-isovaleric acid (2-HIV), one of the precursor residues incorporated by AMT1 during AM-toxin biosynthesis, by reduction of its ketone to an alcohol. The cytochrome P450 monooxygenase AMT3 and the thioesterase AMT4 are also important for AM-toxin production, but their exact function within the AM-toxin biosynthesis are not known yet. Up to 21 proteins (including AMT1 to AMT4) are predicted to be involved in AM-toxin biosynthesis since their expression ishighly up-regulated in AM-toxin-producing cultures. The protein is Phospho-2-dehydro-3-deoxyheptonate aldolase AMT16 of Alternaria alternata (Alternaria rot fungus).